Here is a 503-residue protein sequence, read N- to C-terminus: ATP synthase subunit alpha (503 aa).

Position 169-176 (Gly-169–Thr-176) interacts with ATP.

The protein belongs to the ATPase alpha/beta chains family. As to quaternary structure, F-type ATPases have 2 components, CF(1) - the catalytic core - and CF(0) - the membrane proton channel. CF(1) has five subunits: alpha(3), beta(3), gamma(1), delta(1), epsilon(1). CF(0) has three main subunits: a(1), b(2) and c(9-12). The alpha and beta chains form an alternating ring which encloses part of the gamma chain. CF(1) is attached to CF(0) by a central stalk formed by the gamma and epsilon chains, while a peripheral stalk is formed by the delta and b chains.

Its subcellular location is the cell membrane. The enzyme catalyses ATP + H2O + 4 H(+)(in) = ADP + phosphate + 5 H(+)(out). Its function is as follows. Produces ATP from ADP in the presence of a proton gradient across the membrane. The alpha chain is a regulatory subunit. This chain is ATP synthase subunit alpha, found in Ligilactobacillus salivarius (strain UCC118) (Lactobacillus salivarius).